The following is a 475-amino-acid chain: Nitrogenase vanadium-iron protein beta chain (475 aa).

Residues C31, C56, C115, and S153 each coordinate [8Fe-7S] cluster.

This sequence belongs to the NifD/NifK/NifE/NifN family. As to quaternary structure, hexamer of two alpha, two beta, and two delta chains. Requires [8Fe-7S] cluster as cofactor.

It carries out the reaction N2 + 8 reduced [2Fe-2S]-[ferredoxin] + 16 ATP + 16 H2O = H2 + 8 oxidized [2Fe-2S]-[ferredoxin] + 2 NH4(+) + 16 ADP + 16 phosphate + 6 H(+). This vanadium-iron protein is part of the nitrogenase complex that catalyzes the key enzymatic reactions in nitrogen fixation. The chain is Nitrogenase vanadium-iron protein beta chain (vnfK) from Azotobacter vinelandii.